A 211-amino-acid polypeptide reads, in one-letter code: N-(5'-phosphoribosyl)anthranilate isomerase (211 aa).

The protein belongs to the TrpF family.

The catalysed reaction is N-(5-phospho-beta-D-ribosyl)anthranilate = 1-(2-carboxyphenylamino)-1-deoxy-D-ribulose 5-phosphate. The protein operates within amino-acid biosynthesis; L-tryptophan biosynthesis; L-tryptophan from chorismate: step 3/5. This is N-(5'-phosphoribosyl)anthranilate isomerase from Methanococcus maripaludis (strain C6 / ATCC BAA-1332).